Reading from the N-terminus, the 231-residue chain is Small ribosomal subunit protein uS3 (231 aa).

The KH type-2 domain maps to 39-107; the sequence is IRKYIVENLP…DVKLNIVEIR (69 aa).

This sequence belongs to the universal ribosomal protein uS3 family. Part of the 30S ribosomal subunit. Forms a tight complex with proteins S10 and S14.

Functionally, binds the lower part of the 30S subunit head. Binds mRNA in the 70S ribosome, positioning it for translation. This Novosphingobium aromaticivorans (strain ATCC 700278 / DSM 12444 / CCUG 56034 / CIP 105152 / NBRC 16084 / F199) protein is Small ribosomal subunit protein uS3.